Reading from the N-terminus, the 706-residue chain is Zinc finger CCCH domain-containing protein 56 (706 aa).

ANK repeat units lie at residues 83–113 (EQRT…ELNL) and 118–150 (DKST…DPNI). Low complexity predominate over residues 211–221 (SSLLSLDSVSS). Residues 211–235 (SSLLSLDSVSSPTKPHGTDVTFASE) are disordered. C3H1-type zinc fingers lie at residues 302-324 (PCPD…HGVF) and 332-356 (QYRT…HANE). Disordered regions lie at residues 396–427 (PSAA…QQNI), 545–616 (SPKN…QTHG), and 652–692 (QMLK…TRES). Polar residues-rich tracts occupy residues 397–427 (SAAQ…QQNI) and 545–560 (SPKN…QASS). Ser568 bears the Phosphoserine mark. The segment covering 580 to 592 (SRSLSSRDFGSSL) has biased composition (low complexity). Polar residues-rich tracts occupy residues 600-616 (DSGS…QTHG), 652-667 (QMLK…NRVV), and 677-686 (QGGSSVNPHN).

This chain is Zinc finger CCCH domain-containing protein 56, found in Arabidopsis thaliana (Mouse-ear cress).